Reading from the N-terminus, the 176-residue chain is Large ribosomal subunit protein uL6 (176 aa).

It belongs to the universal ribosomal protein uL6 family. Part of the 50S ribosomal subunit.

This protein binds to the 23S rRNA, and is important in its secondary structure. It is located near the subunit interface in the base of the L7/L12 stalk, and near the tRNA binding site of the peptidyltransferase center. The polypeptide is Large ribosomal subunit protein uL6 (Burkholderia thailandensis (strain ATCC 700388 / DSM 13276 / CCUG 48851 / CIP 106301 / E264)).